A 429-amino-acid chain; its full sequence is MFS-type efflux pump MSMEG_3705 (429 aa).

A run of 12 helical transmembrane segments spans residues 21–41 (AWAA…DRFL), 59–79 (AIGV…GIAV), 86–106 (GAFG…TMLG), 115–137 (LALT…HAYV), 150–170 (LAVI…GGGL), 181–201 (FVIM…VVGV), 228–248 (FLIV…LTTF), 264–284 (VGVE…LIVG), 299–319 (LWIV…AFVV), 327–347 (LFLA…IAAI), 361–381 (AMFL…VGML), and 397–417 (ALLL…WLAS).

It belongs to the major facilitator superfamily.

The protein localises to the cell inner membrane. Its function is as follows. Probably plays a role in bacterial growth and resistance to antibiotics. In Mycolicibacterium smegmatis (strain ATCC 700084 / mc(2)155) (Mycobacterium smegmatis), this protein is MFS-type efflux pump MSMEG_3705.